A 453-amino-acid polypeptide reads, in one-letter code: Homogentisate 1,2-dioxygenase (453 aa).

The Proton acceptor role is filled by His-306. 2 residues coordinate Fe cation: His-349 and Glu-355. The homogentisate site is built by Tyr-364 and His-385. Residue His-385 coordinates Fe cation.

It belongs to the homogentisate dioxygenase family. Hexamer; dimer of trimers. Fe cation is required as a cofactor.

It carries out the reaction homogentisate + O2 = 4-maleylacetoacetate + H(+). The protein operates within amino-acid degradation; L-phenylalanine degradation; acetoacetate and fumarate from L-phenylalanine: step 4/6. Functionally, involved in the catabolism of homogentisate (2,5-dihydroxyphenylacetate or 2,5-OH-PhAc), a central intermediate in the degradation of phenylalanine and tyrosine. Catalyzes the oxidative ring cleavage of the aromatic ring of homogentisate to yield maleylacetoacetate. The protein is Homogentisate 1,2-dioxygenase of Rhizobium rhizogenes (strain K84 / ATCC BAA-868) (Agrobacterium radiobacter).